Consider the following 245-residue polypeptide: Probable transcriptional regulatory protein APH_0480 (245 aa).

Belongs to the TACO1 family.

Its subcellular location is the cytoplasm. This Anaplasma phagocytophilum (strain HZ) protein is Probable transcriptional regulatory protein APH_0480.